Here is a 192-residue protein sequence, read N- to C-terminus: Spermatogenesis-associated protein 3 (192 aa).

Basic residues predominate over residues 1-15; the sequence is MKKVKKKRSEARRHR. 2 disordered regions span residues 1–65 and 161–184; these read MKKV…TTSR and SRKP…GSGG. Low complexity predominate over residues 19–59; that stretch reads SQHASSNSTSQQPSPESTPQQPSPESTPQQPSPESTPQHSS.

It localises to the cell projection. The protein resides in the cilium. Its subcellular location is the flagellum. This Homo sapiens (Human) protein is Spermatogenesis-associated protein 3 (SPATA3).